A 185-amino-acid chain; its full sequence is MASPWPVWTLSWILILLAVLVPGAAADFNISSLSGLLSPVMTESLLVALPPCHLTGGNATLTVRRANDSKVVRSSFVVPPCRGRRELVSVVDSGSGFTVTRLSAYQVTNLAPGTKYYISYLVTKGASTESSREIPMSTFPRRKAESIGLAMARTGGMVVITVLLSVAMFLLVLGLIIALALGARK.

Residues 1-26 (MASPWPVWTLSWILILLAVLVPGAAA) form the signal peptide. Positions 27–85 (DFNISSLSGLLSPVMTESLLVALPPCHLTGGNATLTVRRANDSKVVRSSFVVPPCRGRR) are excised as a propeptide. Residues Asn-29, Asn-58, and Asn-67 are each glycosylated (N-linked (GlcNAc...) asparagine). Topologically, residues 86–156 (ELVSVVDSGS…IGLAMARTGG (71 aa)) are lumenal. The helical transmembrane segment at 157-177 (MVVITVLLSVAMFLLVLGLII) threads the bilayer. Residues 178–185 (ALALGARK) are Cytoplasmic-facing.

Belongs to the uroplakin-2 family. As to quaternary structure, interacts with uroplakin-1a (UPK1A). In terms of tissue distribution, bladder epithelium.

Its subcellular location is the cell membrane. In terms of biological role, component of the asymmetric unit membrane (AUM); a highly specialized biomembrane elaborated by terminally differentiated urothelial cells. May play an important role in regulating the assembly of the AUM. This chain is Uroplakin-2 (UPK2), found in Bos taurus (Bovine).